The sequence spans 636 residues: Chaperone protein DnaK (636 aa).

Position 196 is a phosphothreonine; by autocatalysis (T196). The interval 591-636 is disordered; that stretch reads LAEAMYKSSSQPGAQEAPPTDGQPKPDEKGKDNVVDAEFVDVDDKK. Over residues 614–624 the composition is skewed to basic and acidic residues; the sequence is PKPDEKGKDNV.

Belongs to the heat shock protein 70 family.

Its function is as follows. Acts as a chaperone. This Solibacter usitatus (strain Ellin6076) protein is Chaperone protein DnaK.